Consider the following 445-residue polypeptide: tRNA modification GTPase MnmE (445 aa).

(6S)-5-formyl-5,6,7,8-tetrahydrofolate-binding residues include R20, E79, and K119. The region spanning 215 to 371 (GLKLAIIGPP…ILKNIENIAE (157 aa)) is the TrmE-type G domain. N225 contacts K(+). Residues 225 to 230 (NTGKSS), 244 to 250 (SNIAGTT), and 269 to 272 (DTAG) contribute to the GTP site. S229 contributes to the Mg(2+) binding site. S244, I246, and T249 together coordinate K(+). A Mg(2+)-binding site is contributed by T250. K445 is a binding site for (6S)-5-formyl-5,6,7,8-tetrahydrofolate.

This sequence belongs to the TRAFAC class TrmE-Era-EngA-EngB-Septin-like GTPase superfamily. TrmE GTPase family. Homodimer. Heterotetramer of two MnmE and two MnmG subunits. The cofactor is K(+).

Its subcellular location is the cytoplasm. In terms of biological role, exhibits a very high intrinsic GTPase hydrolysis rate. Involved in the addition of a carboxymethylaminomethyl (cmnm) group at the wobble position (U34) of certain tRNAs, forming tRNA-cmnm(5)s(2)U34. In Rickettsia typhi (strain ATCC VR-144 / Wilmington), this protein is tRNA modification GTPase MnmE.